The following is a 497-amino-acid chain: Serine/threonine-protein phosphatase 2A 56 kDa regulatory subunit beta isoform (497 aa).

Over residues 1–19 (METKLPPASTPTSPSSPGL) the composition is skewed to low complexity. Disordered regions lie at residues 1–55 (METK…YQSN) and 473–497 (QGTQ…GGQS). Phosphoserine is present on residues S32, S35, S44, S46, S47, and S48. Residues 34 to 45 (RSLRRARPRRSH) show a composition bias toward basic residues.

It belongs to the phosphatase 2A regulatory subunit B56 family. Component of the serine/threonine-protein phosphatase 2A complex (PP2A). This complex consists of a common heterodimeric core enzyme, composed of a 36 kDa catalytic subunit (subunit C) and a 65 kDa constant scaffold subunit (PR65 or subunit A), that associates with a variety of regulatory subunits. Proteins that associate with the core dimer include three families of regulatory subunits B (the R2/B/PR55/B55, R3/B''/PR72/PR130/PR59 and R5/B'/B56 families), the 48 kDa variable regulatory subunit, viral proteins, and cell signaling molecules. Interacts with SGO1. Interacts with AKT1. Ubiquitinated by CUL3-KLHL15 complex; this modification leads to proteasomal degradation. In terms of tissue distribution, widely expressed at the mRNA level, with highest levels in cerebellum and lung.

It is found in the cytoplasm. Functionally, as the regulatory component of the serine/threonine-protein phosphatase 2A (PP2A) holoenzyme, modulates substrate specificity, subcellular localization, and responsiveness to phosphorylation. The phosphorylated form mediates the interaction between PP2A and AKT1, leading to AKT1 dephosphorylation. This chain is Serine/threonine-protein phosphatase 2A 56 kDa regulatory subunit beta isoform (Ppp2r5b), found in Rattus norvegicus (Rat).